The sequence spans 1096 residues: Carbamoyl phosphate synthase large chain (1096 aa).

Residues 1–402 (MPKRDDINSV…ALQKALRSLE (402 aa)) are carboxyphosphate synthetic domain. The ATP site is built by Arg129, Arg169, Gly175, Gly176, Glu208, Ile210, Glu215, Gly241, Val242, His243, Gln285, and Glu299. Residues 133 to 328 (KDLVIESGAD…IAKIAAKLAI (196 aa)) form the ATP-grasp 1 domain. The Mg(2+) site is built by Gln285, Glu299, and Asn301. 3 residues coordinate Mn(2+): Gln285, Glu299, and Asn301. The segment at 403 to 547 (KRGSSFHWGP…YSSYDSETEI (145 aa)) is oligomerization domain. Positions 548-950 (VPSDRRKVII…AFAKSQEAAF (403 aa)) are carbamoyl phosphate synthetic domain. The region spanning 676-870 (SGILDTAGLV…LAKAASLVMV (195 aa)) is the ATP-grasp 2 domain. The ATP site is built by Arg712, Arg754, Leu756, Glu761, Gly786, Ile787, His788, Ser789, Gln829, and Glu841. Gln829, Glu841, and Asn843 together coordinate Mg(2+). Gln829, Glu841, and Asn843 together coordinate Mn(2+). Residues 951–1095 (GGLPLSGTVF…QDYAIAREAR (145 aa)) enclose the MGS-like domain. The tract at residues 951–1096 (GGLPLSGTVF…DYAIAREARR (146 aa)) is allosteric domain.

It belongs to the CarB family. As to quaternary structure, composed of two chains; the small (or glutamine) chain promotes the hydrolysis of glutamine to ammonia, which is used by the large (or ammonia) chain to synthesize carbamoyl phosphate. Tetramer of heterodimers (alpha,beta)4. It depends on Mg(2+) as a cofactor. The cofactor is Mn(2+).

The enzyme catalyses hydrogencarbonate + L-glutamine + 2 ATP + H2O = carbamoyl phosphate + L-glutamate + 2 ADP + phosphate + 2 H(+). The catalysed reaction is hydrogencarbonate + NH4(+) + 2 ATP = carbamoyl phosphate + 2 ADP + phosphate + 2 H(+). The protein operates within amino-acid biosynthesis; L-arginine biosynthesis; carbamoyl phosphate from bicarbonate: step 1/1. It functions in the pathway pyrimidine metabolism; UMP biosynthesis via de novo pathway; (S)-dihydroorotate from bicarbonate: step 1/3. Its function is as follows. Large subunit of the glutamine-dependent carbamoyl phosphate synthetase (CPSase). CPSase catalyzes the formation of carbamoyl phosphate from the ammonia moiety of glutamine, carbonate, and phosphate donated by ATP, constituting the first step of 2 biosynthetic pathways, one leading to arginine and/or urea and the other to pyrimidine nucleotides. The large subunit (synthetase) binds the substrates ammonia (free or transferred from glutamine from the small subunit), hydrogencarbonate and ATP and carries out an ATP-coupled ligase reaction, activating hydrogencarbonate by forming carboxy phosphate which reacts with ammonia to form carbamoyl phosphate. In Clavibacter michiganensis subsp. michiganensis (strain NCPPB 382), this protein is Carbamoyl phosphate synthase large chain.